The following is a 92-amino-acid chain: Small ribosomal subunit protein uS19 (92 aa).

The disordered stretch occupies residues G72–G92.

This sequence belongs to the universal ribosomal protein uS19 family.

In terms of biological role, protein S19 forms a complex with S13 that binds strongly to the 16S ribosomal RNA. The chain is Small ribosomal subunit protein uS19 from Gluconobacter oxydans (strain 621H) (Gluconobacter suboxydans).